Here is a 391-residue protein sequence, read N- to C-terminus: tRNA-specific 2-thiouridylase MnmA (391 aa).

Residues 20 to 27 and Leu46 contribute to the ATP site; that span reads AMSGGVDS. The Nucleophile role is filled by Cys114. A disulfide bond links Cys114 and Cys210. Gly138 provides a ligand contact to ATP. The tract at residues 160–162 is interaction with tRNA; it reads RDQ. The Cysteine persulfide intermediate role is filled by Cys210.

Belongs to the MnmA/TRMU family.

Its subcellular location is the cytoplasm. The enzyme catalyses S-sulfanyl-L-cysteinyl-[protein] + uridine(34) in tRNA + AH2 + ATP = 2-thiouridine(34) in tRNA + L-cysteinyl-[protein] + A + AMP + diphosphate + H(+). In terms of biological role, catalyzes the 2-thiolation of uridine at the wobble position (U34) of tRNA, leading to the formation of s(2)U34. In Bartonella bacilliformis (strain ATCC 35685 / KC583 / Herrer 020/F12,63), this protein is tRNA-specific 2-thiouridylase MnmA.